The sequence spans 392 residues: Protein NirF (392 aa).

The protein resides in the cytoplasm. Its function is as follows. Required for the biosynthesis of heme d1 of nitrite reductase. Could have a dehydrogenase activity yielding sirohydrochlorin from precorrin-2 or dehydrogenation of propionate side chain C17. The polypeptide is Protein NirF (nirF) (Pseudomonas aeruginosa (strain ATCC 15692 / DSM 22644 / CIP 104116 / JCM 14847 / LMG 12228 / 1C / PRS 101 / PAO1)).